An 853-amino-acid chain; its full sequence is Dynamin-A (853 aa).

The Dynamin-type G domain occupies 22 to 296 (PLDLPQIVVV…LMFHIRDTLP (275 aa)). A G1 motif region spans residues 32–39 (GSQSSGKS). A GTP-binding site is contributed by 32–40 (GSQSSGKSS). The G2 motif stretch occupies residues 58–60 (VTR). The tract at residues 138–141 (DLPG) is G3 motif. Residues 207–210 (TKLD) are G4 motif. GTP-binding positions include 207 to 213 (TKLDLMD) and 238 to 241 (NRSQ). The G5 motif stretch occupies residues 237–240 (INRS). Composition is skewed to low complexity over residues 523–569 (DQYQ…QQNQ) and 590–607 (PAQQQPNQQPNQLNKGPQ). Residues 523-738 (DQYQQQQQQQ…RYQDDFYGRG (216 aa)) are disordered. A compositionally biased stretch (polar residues) spans 610–624 (PPNQSKPSSIPQNGP). Low complexity-rich tracts occupy residues 625 to 635 (NNNNNNNNNNN) and 664 to 728 (NNSN…SSYN). The region spanning 762 to 853 (TELIRELLIS…IINEIRDFRN (92 aa)) is the GED domain.

Belongs to the TRAFAC class dynamin-like GTPase superfamily. Dynamin/Fzo/YdjA family.

It is found in the cytoplasm. In terms of biological role, function in membrane trafficking processes along the endo-lysosomal pathway. The protein is Dynamin-A (dymA) of Dictyostelium discoideum (Social amoeba).